Here is a 197-residue protein sequence, read N- to C-terminus: 5'-deoxynucleotidase plu3092 (197 aa).

Substrate-binding positions include 16 to 17 (RW) and histidine 31. The region spanning 28–140 (VSEHSLQVAF…IKQADSLCAY (113 aa)) is the HD domain. Residues histidine 31, histidine 66, and aspartate 67 each contribute to the a divalent metal cation site. Substrate is bound by residues aspartate 67, 75-78 (DLPT), and aspartate 135. Aspartate 135 serves as a coordination point for a divalent metal cation.

This sequence belongs to the 5DNU family. As to quaternary structure, homodimer. It depends on a divalent metal cation as a cofactor.

It is found in the cytoplasm. The catalysed reaction is a 2'-deoxyribonucleoside 5'-phosphate + H2O = a 2'-deoxyribonucleoside + phosphate. In terms of biological role, catalyzes the strictly specific dephosphorylation of 2'-deoxyribonucleoside 5'-monophosphates. The polypeptide is 5'-deoxynucleotidase plu3092 (Photorhabdus laumondii subsp. laumondii (strain DSM 15139 / CIP 105565 / TT01) (Photorhabdus luminescens subsp. laumondii)).